Here is a 124-residue protein sequence, read N- to C-terminus: Putative iron-sulfur cluster insertion protein ErpA (124 aa).

Positions 52, 116, and 118 each coordinate iron-sulfur cluster.

The protein belongs to the HesB/IscA family. As to quaternary structure, homodimer. The cofactor is iron-sulfur cluster.

Required for insertion of 4Fe-4S clusters. The protein is Putative iron-sulfur cluster insertion protein ErpA of Ralstonia nicotianae (strain ATCC BAA-1114 / GMI1000) (Ralstonia solanacearum).